A 98-amino-acid chain; its full sequence is Cell cycle protein GpsB (98 aa).

The stretch at 34–72 (LDMVIKDYEAFHQEIEELQQENLQLKKQLEEANKRQPAQ) forms a coiled coil.

The protein belongs to the GpsB family. Forms polymers through the coiled coil domains. Interacts with PBP1, MreC and EzrA.

It localises to the cytoplasm. Functionally, divisome component that associates with the complex late in its assembly, after the Z-ring is formed, and is dependent on DivIC and PBP2B for its recruitment to the divisome. Together with EzrA, is a key component of the system that regulates PBP1 localization during cell cycle progression. Its main role could be the removal of PBP1 from the cell pole after pole maturation is completed. Also contributes to the recruitment of PBP1 to the division complex. Not essential for septum formation. The protein is Cell cycle protein GpsB of Bacillus licheniformis (strain ATCC 14580 / DSM 13 / JCM 2505 / CCUG 7422 / NBRC 12200 / NCIMB 9375 / NCTC 10341 / NRRL NRS-1264 / Gibson 46).